The sequence spans 279 residues: 4-hydroxy-3-methylbut-2-enyl diphosphate reductase (279 aa).

Cysteine 12 contacts [4Fe-4S] cluster. Histidine 42 and histidine 74 together coordinate (2E)-4-hydroxy-3-methylbut-2-enyl diphosphate. Dimethylallyl diphosphate-binding residues include histidine 42 and histidine 74. Isopentenyl diphosphate-binding residues include histidine 42 and histidine 74. Position 96 (cysteine 96) interacts with [4Fe-4S] cluster. A (2E)-4-hydroxy-3-methylbut-2-enyl diphosphate-binding site is contributed by histidine 124. Position 124 (histidine 124) interacts with dimethylallyl diphosphate. Residue histidine 124 coordinates isopentenyl diphosphate. Residue glutamate 126 is the Proton donor of the active site. Residue threonine 162 coordinates (2E)-4-hydroxy-3-methylbut-2-enyl diphosphate. Cysteine 190 contacts [4Fe-4S] cluster. Positions 218, 219, 220, and 263 each coordinate (2E)-4-hydroxy-3-methylbut-2-enyl diphosphate. 4 residues coordinate dimethylallyl diphosphate: serine 218, serine 219, asparagine 220, and serine 263. The isopentenyl diphosphate site is built by serine 218, serine 219, asparagine 220, and serine 263.

The protein belongs to the IspH family. Requires [4Fe-4S] cluster as cofactor.

It carries out the reaction isopentenyl diphosphate + 2 oxidized [2Fe-2S]-[ferredoxin] + H2O = (2E)-4-hydroxy-3-methylbut-2-enyl diphosphate + 2 reduced [2Fe-2S]-[ferredoxin] + 2 H(+). It catalyses the reaction dimethylallyl diphosphate + 2 oxidized [2Fe-2S]-[ferredoxin] + H2O = (2E)-4-hydroxy-3-methylbut-2-enyl diphosphate + 2 reduced [2Fe-2S]-[ferredoxin] + 2 H(+). It participates in isoprenoid biosynthesis; dimethylallyl diphosphate biosynthesis; dimethylallyl diphosphate from (2E)-4-hydroxy-3-methylbutenyl diphosphate: step 1/1. Its pathway is isoprenoid biosynthesis; isopentenyl diphosphate biosynthesis via DXP pathway; isopentenyl diphosphate from 1-deoxy-D-xylulose 5-phosphate: step 6/6. Its function is as follows. Catalyzes the conversion of 1-hydroxy-2-methyl-2-(E)-butenyl 4-diphosphate (HMBPP) into a mixture of isopentenyl diphosphate (IPP) and dimethylallyl diphosphate (DMAPP). Acts in the terminal step of the DOXP/MEP pathway for isoprenoid precursor biosynthesis. This is 4-hydroxy-3-methylbut-2-enyl diphosphate reductase from Alkaliphilus oremlandii (strain OhILAs) (Clostridium oremlandii (strain OhILAs)).